The primary structure comprises 209 residues: Uracil phosphoribosyltransferase (209 aa).

5-phospho-alpha-D-ribose 1-diphosphate is bound by residues Arg79, Arg104, and 131–139 (DPMLATGNS). Residues Ile194 and 199–201 (GDA) each bind uracil. Asp200 is a binding site for 5-phospho-alpha-D-ribose 1-diphosphate.

This sequence belongs to the UPRTase family. The cofactor is Mg(2+).

It catalyses the reaction UMP + diphosphate = 5-phospho-alpha-D-ribose 1-diphosphate + uracil. It functions in the pathway pyrimidine metabolism; UMP biosynthesis via salvage pathway; UMP from uracil: step 1/1. Its activity is regulated as follows. Allosterically activated by GTP. Its function is as follows. Catalyzes the conversion of uracil and 5-phospho-alpha-D-ribose 1-diphosphate (PRPP) to UMP and diphosphate. This Acidovorax sp. (strain JS42) protein is Uracil phosphoribosyltransferase.